Consider the following 99-residue polypeptide: Transmembrane protein 14A (99 aa).

A run of 3 helical transmembrane segments spans residues 1–21 (MDLIGFGYAALVTFGSILGYK), 24–44 (GGVLSLIAGLFVGFLAGYGAY), and 79–99 (PAGLVAGLSLLMILRLVLLLL).

It belongs to the TMEM14 family.

It is found in the mitochondrion membrane. The protein resides in the endoplasmic reticulum membrane. Functionally, inhibits apoptosis via negative regulation of the mitochondrial outer membrane permeabilization involved in apoptotic signaling pathway. The chain is Transmembrane protein 14A (TMEM14A) from Bos taurus (Bovine).